The following is a 166-amino-acid chain: Peptidoglycan-associated lipoprotein (166 aa).

Residues methionine 1–glycine 21 form the signal peptide. Cysteine 22 is lipidated: N-palmitoyl cysteine. Cysteine 22 carries the S-diacylglycerol cysteine lipid modification. The OmpA-like domain occupies serine 54–lysine 166. Residues valine 147–lysine 166 form a disordered region.

This sequence belongs to the Pal lipoprotein family. In terms of assembly, the Tol-Pal system is composed of five core proteins: the inner membrane proteins TolA, TolQ and TolR, the periplasmic protein TolB and the outer membrane protein Pal. They form a network linking the inner and outer membranes and the peptidoglycan layer.

The protein resides in the cell outer membrane. Functionally, part of the Tol-Pal system, which plays a role in outer membrane invagination during cell division and is important for maintaining outer membrane integrity. The protein is Peptidoglycan-associated lipoprotein of Pseudomonas putida (Arthrobacter siderocapsulatus).